The chain runs to 325 residues: MKPILLQGHERSITQIKYNREGDLLFTVAKDPIVNVWYSVNGERLGTYNGHTGAVWCVDADWDTRHVLTGSADNSCRLWDCETGKQLALVKTSSAVRTCGFDFGGNIIMFSTDKQMGYQCFVSFFDLRDPSQIENNEPYMKIPCSDSKITSAVWGPLGEFIIAGHENGELNQFSAKSGEQLSNIKEHTKQINDIQTSRDMTMFITASKDNTAKLFDCTSLKHLKTFRTERPVNSAALSPIFDHVVLGGGQEAMDVTTTSTRIGKFEARFFHLAFEEEFGRVKGHFGPINSVAFHPDGKSYSSGGEDGYVRIHYFDPQYFEFEFEA.

WD repeat units follow at residues 8-47 (GHERSITQIKYNREGDLLFTVAKDPIVNVWYSVNGERLGT), 50-89 (GHTGAVWCVDADWDTRHVLTGSADNSCRLWDCETGKQLAL), 144-183 (CSDSKITSAVWGPLGEFIIAGHENGELNQFSAKSGEQLSN), 186-225 (EHTKQINDIQTSRDMTMFITASKDNTAKLFDCTSLKHLKT), and 283-324 (GHFG…FEFE).

It belongs to the eIF-3 subunit I family. Component of the eukaryotic translation initiation factor 3 (eIF-3) complex, which is composed of 13 subunits: EIF3A, EIF3B, EIF3C, EIF3D, EIF3E, EIF3F, EIF3G, EIF3H, EIF3I, EIF3J, EIF3K, EIF3L and EIF3M.

It is found in the cytoplasm. Component of the eukaryotic translation initiation factor 3 (eIF-3) complex, which is involved in protein synthesis of a specialized repertoire of mRNAs and, together with other initiation factors, stimulates binding of mRNA and methionyl-tRNAi to the 40S ribosome. The eIF-3 complex specifically targets and initiates translation of a subset of mRNAs involved in cell proliferation. The sequence is that of Eukaryotic translation initiation factor 3 subunit I from Taeniopygia guttata (Zebra finch).